Consider the following 542-residue polypeptide: NXPE family member 4 (542 aa).

A signal peptide spans 1–26; it reads MKMMASRKSLWVLLFIVIFWISFTVF. Residues N91, N92, N159, and N223 are each glycosylated (N-linked (GlcNAc...) asparagine).

The protein belongs to the NXPE family.

It localises to the secreted. The polypeptide is NXPE family member 4 (Nxpe4) (Rattus norvegicus (Rat)).